The sequence spans 832 residues: Mechanosensitive cation channel TMEM63B (832 aa).

The Extracellular portion of the chain corresponds to 1-40 (MLPFLLATLGTAALNSSNPKDYCYSARIRSTVLQGLPFGG). Residues 41-65 (VPTVLALDFMCFLALLFLFSILRKV) form a helical membrane-spanning segment. A lipid anchor (S-palmitoyl cysteine) is attached at C51. Topologically, residues 66–145 (AWDYGRLALV…KDDEIRDKCG (80 aa)) are cytoplasmic. The Mediates endoplasmic reticulum retention signature appears at 86-88 (RER). 4 positions are modified to phosphoserine: S111, S113, S114, and S115. The S-palmitoyl cysteine moiety is linked to residue C126. Residues 146-178 (GDAVHYLSFQRHIIGLLVVVGVLSVGIVLPVNF) traverse the membrane as a helical segment. The Extracellular portion of the chain corresponds to 179 to 202 (SGDLLENNAYSFGRTTIANLKSGN). The chain crosses the membrane as a helical span at residues 203 to 227 (NLLWLHTSFAFLYLLLTVYSMRRHT). The Cytoplasmic portion of the chain corresponds to 228 to 427 (SKMRYKEDDL…IYWEHLSIRG (200 aa)). The intracellular linker IL2; confers mechanosensitivity stretch occupies residues 231-426 (RYKEDDLVKR…NIYWEHLSIR (196 aa)). Residues C382 and C398 are each lipidated (S-palmitoyl cysteine). A helical transmembrane segment spans residues 428 to 457 (FIWWLRCLVINVVLFILLFFLTTPAIIITT). At 458 to 472 (MDKFNVTKPVEYLNN) the chain is on the extracellular side. N462 carries N-linked (GlcNAc...) asparagine glycosylation. The helical transmembrane segment at 473-502 (PIITQFFPTLLLWCFSALLPTIVYYSAFFE) threads the bilayer. At 503-506 (AHWT) the chain is on the cytoplasmic side. Residues 507–543 (RSGENRTTMHKCYTFLIFMVLLLPSLGLSSLDLFFRW) traverse the membrane as a helical segment. The Extracellular segment spans residues 544–566 (LFDKKFLAEAAIRFECVFLPDNG). A helical transmembrane segment spans residues 567–599 (AFFVNYVIASAFIGNAMDLLRIPGLLMYMIRLC). The interval 567-599 (AFFVNYVIASAFIGNAMDLLRIPGLLMYMIRLC) is gating helix. Over 600–619 (LARSAAERRNVKRHQAYEFQ) the chain is Cytoplasmic. A helical membrane pass occupies residues 620 to 638 (FGAAYAWMMCVFTVVMTYS). At 639 to 641 (ITC) the chain is on the extracellular side. Residues 642-666 (PIIVPFGLMYMLLKHLVDRYNLYYA) traverse the membrane as a helical segment. Over 667 to 673 (YLPAKLD) the chain is Cytoplasmic. A helical transmembrane segment spans residues 674–702 (KKIHSGAVNQVVAAPILCLFWLLFFSTMR). Residues 703 to 707 (TGFLA) are Extracellular-facing. Residues 708–728 (PTSMFTFVVLVITIVICLCHV) traverse the membrane as a helical segment. Residues C726 and C729 are each lipidated (S-palmitoyl cysteine). Over 729 to 832 (CFGHFKYLSA…DSLIENEIHQ (104 aa)) the chain is Cytoplasmic. 2 disordered regions span residues 748-767 (TDAVSSRSNGRPPTAGAVPK) and 776-818 (LQDS…DTDF). The span at 749–758 (DAVSSRSNGR) shows a compositional bias: polar residues. Residues 789–801 (PGSSGDEPPSSSS) are compositionally biased toward low complexity.

The protein belongs to the CSC1 (TC 1.A.17) family. Monomer. Interacts with SLC19A2; interaction is required for the phospholipid scramblase activity. Post-translationally, palmitoylation is required for localization to the plasma membrane and stability. As to expression, expressed in cochlear hair cells (at protein level). Highly expressed in the subfornical organ of the brain. Expressed in small intestine. In terms of tissue distribution, brain-specific.

Its subcellular location is the cell membrane. It is found in the endoplasmic reticulum membrane. The protein localises to the lysosome membrane. The protein resides in the early endosome membrane. It carries out the reaction Ca(2+)(in) = Ca(2+)(out). The enzyme catalyses Mg(2+)(in) = Mg(2+)(out). The catalysed reaction is K(+)(in) = K(+)(out). It catalyses the reaction Na(+)(in) = Na(+)(out). It carries out the reaction Cs(+)(in) = Cs(+)(out). The enzyme catalyses a 1,2-diacyl-sn-glycero-3-phosphocholine(in) = a 1,2-diacyl-sn-glycero-3-phosphocholine(out). The catalysed reaction is a sphingomyelin(in) = a sphingomyelin(out). Functionally, mechanosensitive cation channel with low conductance and high activation threshold. Osmosensitive cation channel preferentially activated by hypotonic stress. Also acts as a phospholipid scramblase in response to changes in membrane structure: upon changes in membrane curvature and thickness, alters its conformation and translocates phospholipids, such as phosphatidylcholine and sphingomyelin, thereby controlling plasma membrane lipid distribution. Forms a heterodimer with SLC19A2, which mediates phospholipid scramblase activity following Ca(2+) stimulation. Expressed in excitatory neurons of the subfornical organ and functions as a thirst receptor that mediates neuronal response to hyperosmolality to drive thirst and drinking behavior. Facilitates intestinal motility by promoting proliferation of intestinal stem cells. Essential for the baby's first breath and respiration throughout life. Upon lung inflation conducts cation currents in alveolar type 1 and 2 cells triggering lamellar body exocytosis and surfactant secretion into airspace. Acts as an osmosensor in cochlear outer hair cells (OHCs) where it mediates calcium influx and regulatory volume decrease response. Required for the maintenance of OHC morphology, OHC survival and normal hearing. Brain-specific osmosensitive calcium channel isoform. This chain is Mechanosensitive cation channel TMEM63B, found in Mus musculus (Mouse).